We begin with the raw amino-acid sequence, 337 residues long: Ketol-acid reductoisomerase (NADP(+)) (337 aa).

The 181-residue stretch at 3–183 folds into the KARI N-terminal Rossmann domain; sequence VEMFYDDDAD…GGARAGVIKT (181 aa). NADP(+) is bound by residues 26 to 29, lysine 49, serine 52, serine 54, and 84 to 87; these read YGSQ and DTAQ. Histidine 109 is an active-site residue. Position 135 (glycine 135) interacts with NADP(+). Residues 184–329 form the KARI C-terminal knotted domain; that stretch reads TFKEETETDL…KKLRDLMSWV (146 aa). Residues aspartate 192, glutamate 196, glutamate 228, and glutamate 232 each contribute to the Mg(2+) site. A substrate-binding site is contributed by serine 253.

This sequence belongs to the ketol-acid reductoisomerase family. The cofactor is Mg(2+).

The catalysed reaction is (2R)-2,3-dihydroxy-3-methylbutanoate + NADP(+) = (2S)-2-acetolactate + NADPH + H(+). The enzyme catalyses (2R,3R)-2,3-dihydroxy-3-methylpentanoate + NADP(+) = (S)-2-ethyl-2-hydroxy-3-oxobutanoate + NADPH + H(+). The protein operates within amino-acid biosynthesis; L-isoleucine biosynthesis; L-isoleucine from 2-oxobutanoate: step 2/4. It functions in the pathway amino-acid biosynthesis; L-valine biosynthesis; L-valine from pyruvate: step 2/4. In terms of biological role, involved in the biosynthesis of branched-chain amino acids (BCAA). Catalyzes an alkyl-migration followed by a ketol-acid reduction of (S)-2-acetolactate (S2AL) to yield (R)-2,3-dihydroxy-isovalerate. In the isomerase reaction, S2AL is rearranged via a Mg-dependent methyl migration to produce 3-hydroxy-3-methyl-2-ketobutyrate (HMKB). In the reductase reaction, this 2-ketoacid undergoes a metal-dependent reduction by NADPH to yield (R)-2,3-dihydroxy-isovalerate. The chain is Ketol-acid reductoisomerase (NADP(+)) from Mycolicibacterium smegmatis (strain ATCC 700084 / mc(2)155) (Mycobacterium smegmatis).